The primary structure comprises 277 residues: MDNAVDRHVFYISDGTAITAEVLGHAVMSQFPVAINSITLPFVENESRAKAVKEQIDAIFQQTGTRPLVFYSIVIPEIRDIILQSEGFCQDIVQALVAPLQGELKLDPTPIAHRTHGLNPGNLIKYDARIAAIDYTLAHDDGISMRNLDQAQVILLGVSRCGKTPTSLYLAMQFGIRAANYPFIADDMDNLVLPPALKPLQHKLFGLTINPERLAAIREERRENSRYASMRQCRMEVSEVEALYRKNQIPWLNSTNYSVEEIATKILDIMGLNRRMY.

Residue 157–164 (GVSRCGKT) coordinates ADP.

The protein belongs to the pyruvate, phosphate/water dikinase regulatory protein family. PSRP subfamily.

The enzyme catalyses [pyruvate, water dikinase] + ADP = [pyruvate, water dikinase]-phosphate + AMP + H(+). The catalysed reaction is [pyruvate, water dikinase]-phosphate + phosphate + H(+) = [pyruvate, water dikinase] + diphosphate. Functionally, bifunctional serine/threonine kinase and phosphorylase involved in the regulation of the phosphoenolpyruvate synthase (PEPS) by catalyzing its phosphorylation/dephosphorylation. In Enterobacter sp. (strain 638), this protein is Putative phosphoenolpyruvate synthase regulatory protein.